Consider the following 119-residue polypeptide: uncharacterized protein (119 aa).

A run of 4 helical transmembrane segments spans residues tryptophan 3–serine 23, leucine 29–threonine 49, alanine 58–phenylalanine 78, and valine 87–alanine 107.

Belongs to the drug/metabolite transporter (DMT) superfamily. Small multidrug resistance (SMR) (TC 2.A.7.1) family.

Its subcellular location is the cell membrane. This is an uncharacterized protein from Bacillus subtilis (strain 168).